The primary structure comprises 257 residues: uncharacterized protein (257 aa).

The first 26 residues, 1-26, serve as a signal peptide directing secretion; sequence MKKAFILSAAAAVGLFTFGGVQQASA. The interval 80 to 135 is disordered; the sequence is AKQSNVKVQDVQKTETAKPAQKTTEKAAADQNTASKAPATAEKTNTTTSAPSSVSA. Residues 121–134 show a composition bias toward polar residues; sequence EKTNTTTSAPSSVS. Residues 141 to 254 enclose the SCP domain; sequence VELTNAERQK…ESGSIWTQQF (114 aa).

This is an uncharacterized protein from Bacillus subtilis (strain 168).